A 122-amino-acid polypeptide reads, in one-letter code: MDWDLITERNIQLFIQLAGLAERPLATNMFWRQGQYETYLNYHNGRIHLCQILKQTFLDEELLFKALANWKPAAFQGIPQRLFLLRDGLAMSCSPPLSSSAELWLRLHHRQIKFLESQCVHG.

This chain is Secretion system apparatus protein SsaM (ssaM), found in Salmonella typhimurium (strain LT2 / SGSC1412 / ATCC 700720).